The primary structure comprises 228 residues: 2,3-bisphosphoglycerate-dependent phosphoglycerate mutase (228 aa).

Substrate contacts are provided by residues 8–15 (RHGQSEWN), 21–22 (TG), arginine 60, 87–90 (ERHY), lysine 98, 114–115 (RR), and 183–184 (GN). Residue histidine 9 is the Tele-phosphohistidine intermediate of the active site. The active-site Proton donor/acceptor is glutamate 87.

This sequence belongs to the phosphoglycerate mutase family. BPG-dependent PGAM subfamily.

It carries out the reaction (2R)-2-phosphoglycerate = (2R)-3-phosphoglycerate. It participates in carbohydrate degradation; glycolysis; pyruvate from D-glyceraldehyde 3-phosphate: step 3/5. Functionally, catalyzes the interconversion of 2-phosphoglycerate and 3-phosphoglycerate. This Staphylococcus aureus (strain MRSA252) protein is 2,3-bisphosphoglycerate-dependent phosphoglycerate mutase.